Here is a 243-residue protein sequence, read N- to C-terminus: NEDD4-binding protein 2-like 1 (243 aa).

The disordered stretch occupies residues methionine 1 to histidine 38.

In terms of assembly, interacts with dynactin subunit proteins, including DCTN4, DCTN5 and DCTN5.

In terms of biological role, might play a role in adipocyte differentiation and triglyceride accumulation. The chain is NEDD4-binding protein 2-like 1 (N4BP2L1) from Homo sapiens (Human).